Reading from the N-terminus, the 235-residue chain is Phosphoribosylformylglycinamidine synthase subunit PurQ (235 aa).

Residues glycine 4–arginine 234 enclose the Glutamine amidotransferase type-1 domain. Catalysis depends on cysteine 86, which acts as the Nucleophile. Residues histidine 203 and glutamate 205 contribute to the active site.

Part of the FGAM synthase complex composed of 1 PurL, 1 PurQ and 2 PurS subunits.

Its subcellular location is the cytoplasm. The enzyme catalyses N(2)-formyl-N(1)-(5-phospho-beta-D-ribosyl)glycinamide + L-glutamine + ATP + H2O = 2-formamido-N(1)-(5-O-phospho-beta-D-ribosyl)acetamidine + L-glutamate + ADP + phosphate + H(+). It carries out the reaction L-glutamine + H2O = L-glutamate + NH4(+). It functions in the pathway purine metabolism; IMP biosynthesis via de novo pathway; 5-amino-1-(5-phospho-D-ribosyl)imidazole from N(2)-formyl-N(1)-(5-phospho-D-ribosyl)glycinamide: step 1/2. Its function is as follows. Part of the phosphoribosylformylglycinamidine synthase complex involved in the purines biosynthetic pathway. Catalyzes the ATP-dependent conversion of formylglycinamide ribonucleotide (FGAR) and glutamine to yield formylglycinamidine ribonucleotide (FGAM) and glutamate. The FGAM synthase complex is composed of three subunits. PurQ produces an ammonia molecule by converting glutamine to glutamate. PurL transfers the ammonia molecule to FGAR to form FGAM in an ATP-dependent manner. PurS interacts with PurQ and PurL and is thought to assist in the transfer of the ammonia molecule from PurQ to PurL. The polypeptide is Phosphoribosylformylglycinamidine synthase subunit PurQ (Symbiobacterium thermophilum (strain DSM 24528 / JCM 14929 / IAM 14863 / T)).